Reading from the N-terminus, the 129-residue chain is Large ribosomal subunit protein bL17 (129 aa).

The protein belongs to the bacterial ribosomal protein bL17 family. As to quaternary structure, part of the 50S ribosomal subunit. Contacts protein L32.

This Thiobacillus denitrificans (strain ATCC 25259 / T1) protein is Large ribosomal subunit protein bL17.